Reading from the N-terminus, the 239-residue chain is MADKKAPAAGWPVANGEYVVGNPESCVAVVTLGSHGLDQAAIDAGAAISGPCHTENLGIEKVVANYISNPNIRFMVITGSEVQGHITGQCIKALYENGIGDDGGIIGAKGAIPFMENVGTEPVGRLQSQIVECIDLIDVEDTGKISDAIKNCISKDPGAFEEEPMVIELEGGAAAAGEESTSIKPTSPEMALLEARMRIVSEKMNEAAMIAKFNSGYYNGKIQGIAIGLFLSIVIFSLL.

Topologically, residues 1-215 (MADKKAPAAG…EAAMIAKFNS (215 aa)) are cytoplasmic. Histidine 85 is a 5-hydroxybenzimidazolylcob(I)amide binding site. The chain crosses the membrane as a helical span at residues 216–238 (GYYNGKIQGIAIGLFLSIVIFSL). Residue leucine 239 is a topological domain, extracellular.

It belongs to the MtrA family. As to quaternary structure, the complex is composed of 8 subunits; MtrA, MtrB, MtrC, MtrD, MtrE, MtrF, MtrG and MtrH. 5-hydroxybenzimidazolylcob(I)amide serves as cofactor.

The protein localises to the cell membrane. The catalysed reaction is 5-methyl-5,6,7,8-tetrahydromethanopterin + coenzyme M + 2 Na(+)(in) = 5,6,7,8-tetrahydromethanopterin + methyl-coenzyme M + 2 Na(+)(out). It functions in the pathway one-carbon metabolism; methanogenesis from CO(2); methyl-coenzyme M from 5,10-methylene-5,6,7,8-tetrahydromethanopterin: step 2/2. Part of a complex that catalyzes the formation of methyl-coenzyme M and tetrahydromethanopterin from coenzyme M and methyl-tetrahydromethanopterin. This is an energy-conserving, sodium-ion translocating step. This is Tetrahydromethanopterin S-methyltransferase subunit A from Methanococcus maripaludis (strain DSM 14266 / JCM 13030 / NBRC 101832 / S2 / LL).